A 590-amino-acid polypeptide reads, in one-letter code: MDSITSYNVTQMNGDTKQEKCDDVLSTSSTQKFCGGCRKKLRSLLPVNYKTEIVELLKLAGPVFISQLMIFLISFVSTVFCGHLGKTELAGVALAIAVINVTGISIGSGLASACDTLISQTFGSNNLKRVGVILQRGILILLLACFPCWALLINTEPILLAVRQSPNVASLSQLYVKIFMPALPAAFMYQLQGRYLQNQGIIWPQVITGAAGNILNALINYVFLHLLELGVAGSAAANTISQYSLAVFLYVYIRWKNLHKATWDGWSRDCLQEWGAFIRLALPSMLMLCVEWWTYEIGGFLAGLISETELGAQSVVYELATIAYMFPLGFAVAASVRVGNALGAGNTERAKLSAKVALVCGVLVSCVVATLIGCTKDVIAYIFTTEEEIVSRVSQVMIMYGFFHLFDAIAGITGGIVRGAGKQLLGALCNIVGYYFVGFPTGVSLMFALSMGIIGLWIGFFGCVFLQSLFFIILIYKLDWKKATQEALIRAGVQLTETKDESFGLENKGCTEEAAKESQITEEGLTDANTDLEGLSKGGEGISEAGAKTTVGAVLTTKQLIVRRGLAVLLMVLILAGGIVLNEMLVRYLR.

The Cytoplasmic segment spans residues 1-59 (MDSITSYNVTQMNGDTKQEKCDDVLSTSSTQKFCGGCRKKLRSLLPVNYKTEIVELLKL). The helical transmembrane segment at 60 to 80 (AGPVFISQLMIFLISFVSTVF) threads the bilayer. At 81 to 88 (CGHLGKTE) the chain is on the extracellular side. Residues 89-109 (LAGVALAIAVINVTGISIGSG) traverse the membrane as a helical segment. At 110–137 (LASACDTLISQTFGSNNLKRVGVILQRG) the chain is on the cytoplasmic side. The chain crosses the membrane as a helical span at residues 138–158 (ILILLLACFPCWALLINTEPI). The Extracellular portion of the chain corresponds to 159-167 (LLAVRQSPN). The helical transmembrane segment at 168–188 (VASLSQLYVKIFMPALPAAFM) threads the bilayer. Residues 189 to 199 (YQLQGRYLQNQ) lie on the Cytoplasmic side of the membrane. Residues 200-222 (GIIWPQVITGAAGNILNALINYV) traverse the membrane as a helical segment. Over 223 to 231 (FLHLLELGV) the chain is Extracellular. Residues 232-254 (AGSAAANTISQYSLAVFLYVYIR) traverse the membrane as a helical segment. Residues 255–274 (WKNLHKATWDGWSRDCLQEW) lie on the Cytoplasmic side of the membrane. The chain crosses the membrane as a helical span at residues 275–294 (GAFIRLALPSMLMLCVEWWT). The Extracellular portion of the chain corresponds to 295–313 (YEIGGFLAGLISETELGAQ). Residues 314 to 334 (SVVYELATIAYMFPLGFAVAA) form a helical membrane-spanning segment. Residues 335–351 (SVRVGNALGAGNTERAK) lie on the Cytoplasmic side of the membrane. The helical transmembrane segment at 352-372 (LSAKVALVCGVLVSCVVATLI) threads the bilayer. Residues 373–395 (GCTKDVIAYIFTTEEEIVSRVSQ) lie on the Extracellular side of the membrane. The helical transmembrane segment at 396-416 (VMIMYGFFHLFDAIAGITGGI) threads the bilayer. Over 417 to 430 (VRGAGKQLLGALCN) the chain is Cytoplasmic. A helical transmembrane segment spans residues 431–451 (IVGYYFVGFPTGVSLMFALSM). Residue Gly-452 is a topological domain, extracellular. A helical membrane pass occupies residues 453 to 473 (IIGLWIGFFGCVFLQSLFFII). Residues 474-565 (LIYKLDWKKA…TTKQLIVRRG (92 aa)) are Cytoplasmic-facing. Residues 566–586 (LAVLLMVLILAGGIVLNEMLV) form a helical membrane-spanning segment. Topologically, residues 587–590 (RYLR) are extracellular.

The protein belongs to the multi antimicrobial extrusion (MATE) (TC 2.A.66.1) family.

It is found in the cell membrane. In terms of biological role, solute transporter for tetraethylammonium (TEA), cimetidine, metformin, guanidine, N-methylnicotinamide (NMN) and also the zwitterionic cephalosporin cephalexin. Responsible for the secretion of cationic drugs across the brush border membranes. The protein is Multidrug and toxin extrusion protein 1 (slc47a1) of Danio rerio (Zebrafish).